A 187-amino-acid polypeptide reads, in one-letter code: Interferon alpha-3 (187 aa).

The N-terminal stretch at 1–23 is a signal peptide; the sequence is MALPCSFSVALVLLSCHSLCCLA. Disulfide bonds link Cys24–Cys122 and Cys52–Cys160. Residues Asn94 and Asn101 are each glycosylated (N-linked (GlcNAc...) asparagine).

This sequence belongs to the alpha/beta interferon family.

Its subcellular location is the secreted. Functionally, produced by macrophages, IFN-alpha have antiviral activities. Interferon stimulates the production of two enzymes: a protein kinase and an oligoadenylate synthetase. This chain is Interferon alpha-3, found in Canis lupus familiaris (Dog).